A 151-amino-acid polypeptide reads, in one-letter code: Transcriptional repressor NrdR (151 aa).

A zinc finger spans residues 3–34; sequence CPFCNSVDTSVKNSRPSDCKMSVRRRRSCDSC. The region spanning 49–139 is the ATP-cone domain; sequence VKVLKKDGSV…VYMNFSDVND (91 aa).

It belongs to the NrdR family. Zn(2+) serves as cofactor.

Its function is as follows. Negatively regulates transcription of bacterial ribonucleotide reductase nrd genes and operons by binding to NrdR-boxes. The chain is Transcriptional repressor NrdR from Anaplasma marginale (strain Florida).